Reading from the N-terminus, the 129-residue chain is Protein FYV12 (129 aa).

Asparagine 91 carries N-linked (GlcNAc...) asparagine glycosylation. The helical transmembrane segment at 109–128 (LMTTFLLYVLYVCIYISAFI) threads the bilayer.

The protein localises to the membrane. In terms of biological role, involved in K1 killer toxin resistance. This is Protein FYV12 (FYV12) from Saccharomyces cerevisiae (strain ATCC 204508 / S288c) (Baker's yeast).